A 277-amino-acid chain; its full sequence is Caspase-3 (277 aa).

Methionine 1 is subject to N-acetylmethionine. Propeptides lie at residues 1-9 (MENNKTSVD) and 10-28 (SKSI…KSMD). Lysine 11 is modified (N6-acetyllysine). Serine 26 bears the Phosphoserine mark. Catalysis depends on residues histidine 121 and cysteine 163. At cysteine 163 the chain carries S-nitrosocysteine; in inhibited form.

Belongs to the peptidase C14A family. Heterotetramer that consists of two anti-parallel arranged heterodimers, each one formed by a 17 kDa (p17) and a 12 kDa (p12) subunit. Interacts with BIRC6/bruce. As to quaternary structure, (Microbial infection) Subunit p17 interacts with African swine fever virus (ASFV) inhibitor of apoptosis protein. In terms of processing, cleavage by granzyme B, caspase-6, caspase-8 and caspase-10 generates the two active subunits. Additional processing of the propeptides is likely due to the autocatalytic activity of the activated protease. Active heterodimers between the small subunit of caspase-7 protease and the large subunit of caspase-3 also occur and vice versa. Post-translationally, S-nitrosylated on its catalytic site cysteine in unstimulated cell lines and denitrosylated upon activation of the Fas apoptotic pathway, associated with an increase in intracellular caspase activity. Fas therefore activates caspase-3 not only by inducing the cleavage of the caspase zymogen to its active subunits, but also by stimulating the denitrosylation of its active site thiol. Ubiquitinated by BIRC6; this activity is inhibited by DIABLO/SMAC.

The protein localises to the cytoplasm. It carries out the reaction Strict requirement for an Asp residue at positions P1 and P4. It has a preferred cleavage sequence of Asp-Xaa-Xaa-Asp-|- with a hydrophobic amino-acid residue at P2 and a hydrophilic amino-acid residue at P3, although Val or Ala are also accepted at this position.. Inhibited by BIRC6; following inhibition of BIRC6-caspase binding by DIABLO/SMAC, BIRC6 is subjected to caspase cleavage, leading to an increase in active caspases. In terms of biological role, involved in the activation cascade of caspases responsible for apoptosis execution. At the onset of apoptosis, it proteolytically cleaves poly(ADP-ribose) polymerase PARP1 at a '216-Asp-|-Gly-217' bond. Cleaves and activates sterol regulatory element binding proteins (SREBPs) between the basic helix-loop-helix leucine zipper domain and the membrane attachment domain. Cleaves and activates caspase-6, -7 and -9 (CASP6, CASP7 and CASP9, respectively). Cleaves and inactivates interleukin-18 (IL18). Triggers cell adhesion in sympathetic neurons through RET cleavage. Cleaves IL-1 beta between an Asp and an Ala, releasing the mature cytokine which is involved in a variety of inflammatory processes. Cleaves and inhibits serine/threonine-protein kinase AKT1 in response to oxidative stress. Acts as an inhibitor of type I interferon production during virus-induced apoptosis by mediating cleavage of antiviral proteins CGAS, IRF3 and MAVS, thereby preventing cytokine overproduction. Also involved in pyroptosis by mediating cleavage and activation of gasdermin-E (GSDME). Cleaves XRCC4 and phospholipid scramblase proteins XKR4, XKR8 and XKR9, leading to promote phosphatidylserine exposure on apoptotic cell surface. Cleaves BIRC6 following inhibition of BIRC6-caspase binding by DIABLO/SMAC. The polypeptide is Caspase-3 (CASP3) (Sus scrofa (Pig)).